Reading from the N-terminus, the 398-residue chain is Serpin-Z1A (398 aa).

Positions 343-367 (GTEAAASTAIKMVLQQARPPSVMDF) are RCL.

Belongs to the serpin family.

Functionally, inhibits chymotrypsin and cathepsin G in vitro. The polypeptide is Serpin-Z1A (WZCI) (Triticum aestivum (Wheat)).